Consider the following 143-residue polypeptide: Photosystem I reaction center subunit IV B, chloroplastic (143 aa).

The N-terminal 51 residues, Met-1–Arg-51, are a transit peptide targeting the chloroplast. The span at Ala-56–Ala-75 shows a compositional bias: low complexity. Residues Ala-56–Thr-86 form a disordered region.

Belongs to the PsaE family. Post-translationally, 2 isoforms exists (ratio 1:1). With or without the N-terminal alanine.

The protein localises to the plastid. Its subcellular location is the chloroplast thylakoid membrane. Stabilizes the interaction between PsaC and the PSI core, assists the docking of the ferredoxin to PSI and interacts with ferredoxin-NADP oxidoreductase. The polypeptide is Photosystem I reaction center subunit IV B, chloroplastic (PSAEB) (Nicotiana sylvestris (Wood tobacco)).